The following is a 265-amino-acid chain: Tryptophan synthase alpha chain (265 aa).

Active-site proton acceptor residues include Glu49 and Asp60.

Belongs to the TrpA family. As to quaternary structure, tetramer of two alpha and two beta chains.

The enzyme catalyses (1S,2R)-1-C-(indol-3-yl)glycerol 3-phosphate + L-serine = D-glyceraldehyde 3-phosphate + L-tryptophan + H2O. The protein operates within amino-acid biosynthesis; L-tryptophan biosynthesis; L-tryptophan from chorismate: step 5/5. The alpha subunit is responsible for the aldol cleavage of indoleglycerol phosphate to indole and glyceraldehyde 3-phosphate. In Desulfosudis oleivorans (strain DSM 6200 / JCM 39069 / Hxd3) (Desulfococcus oleovorans), this protein is Tryptophan synthase alpha chain.